Consider the following 261-residue polypeptide: Ribosome-inactivating protein PD-L1/PD-L2 (261 aa).

N-linked (GlcNAc...) asparagine; in PD-L1 and PD-L2 glycans are attached at residues Asn10 and Asn43. Disulfide bonds link Cys34/Cys258 and Cys84/Cys105. Tyr72 is an active-site residue. Val73 is a binding site for substrate. A substrate-binding site is contributed by Ser120. Catalysis depends on residues Tyr122, Glu175, and Arg178. Arg178 contributes to the substrate binding site. An N-linked (GlcNAc...) asparagine; in PD-L1 glycan is attached at Asn255.

The protein belongs to the ribosome-inactivating protein family. Type 1 RIP subfamily. In terms of processing, N-glycosylated. Loss of glycosylation does not affect DNA-cleaving ability. Loss of glycosylation does not affect protein synthesis inhibition, but increases adenine polynucleotide glycosidase activity likely as a consequence of the increased accessibility of substrates to the active site pocket in the absence of glycosylation. Expressed in leaves (at protein level).

The catalysed reaction is Endohydrolysis of the N-glycosidic bond at one specific adenosine on the 28S rRNA.. Functionally, inhibits protein synthesis. Has adenine polynucleotide glycosidase activity on herring sperm (hs)DNA and poly(A) substrates. Cleaves supercoiled pBR322 dsDNA. In Phytolacca dioica (Bella sombra tree), this protein is Ribosome-inactivating protein PD-L1/PD-L2.